Reading from the N-terminus, the 436-residue chain is MISYLKKAEKTPQTETATAQKVVTEMLAEIQARGKDAVRQYAKQLDGWSGDIVLTPDQIREQTKDVPAGVRADIDFAIRQVTDFALAQRESLKEFSVELHPGVTAGQRVLPVNVVGCYAPAGRYAHIASAYMGVATAKAAGVKTVVACSSPFRGQGIHPHVLYAFQAAGADVIMALGGVQAIASMAYGLFTGKPADVVVGPGNKFVAEAKRSLYGQVGIDVFAGPSEVAVIADETADPAIVASDLVGQAEHGHESPAWLFTTSRDLADRVMALVPELIAKLPPTARDAATAAWRDYGEVILCGTREEVVEISDRYASEHLEVHTADLDWWLANLTCYGSLFLGEETTVAFGDKTSGPNHVLPTKGAARYSGGLSVHKFMKTLTWQQMTREATRQIGQVTARISRLEGMEAHARTADDRMAKYFPNASFEMGTPVEV.

NAD(+)-binding residues include Tyr-118, Gln-180, and Asn-203. 2 residues coordinate Zn(2+): Gln-248 and His-251. Residues Glu-318 and His-319 each act as proton acceptor in the active site. Zn(2+) contacts are provided by Asp-352 and His-411.

This sequence belongs to the histidinol dehydrogenase family. HpsN subfamily. Requires Zn(2+) as cofactor.

The catalysed reaction is (2R)-3-sulfopropanediol + 2 NAD(+) + H2O = (2R)-3-sulfolactate + 2 NADH + 3 H(+). Functionally, catalyzes the NAD-dependent oxidation of (R)-2,3-dihydroxypropane-1-sulfonate to (R)-3-sulfolactate. The polypeptide is Sulfopropanediol 3-dehydrogenase (Cupriavidus pinatubonensis (strain JMP 134 / LMG 1197) (Cupriavidus necator (strain JMP 134))).